Consider the following 100-residue polypeptide: Small ribosomal subunit protein uS14c (100 aa).

Belongs to the universal ribosomal protein uS14 family. As to quaternary structure, part of the 30S ribosomal subunit.

Its subcellular location is the plastid. The protein resides in the chloroplast. Binds 16S rRNA, required for the assembly of 30S particles. The protein is Small ribosomal subunit protein uS14c of Lobularia maritima (Sweet alyssum).